The primary structure comprises 571 residues: Protein tesmin/TSO1-like CXC 6 (571 aa).

Disordered stretches follow at residues 1–52, 92–119, 293–325, 370–411, and 507–571; these read MGEG…AAAS, IRHPRPESPNSMPRPAGETRDGTPQKKK, NQGTKDSSTHRLGQANNGRTTSSQTGSRAGGNA, LANQ…RSLS, and NGVS…KKDL. Residues 7–16 are compositionally biased toward basic and acidic residues; that stretch reads GDKFPPKTDE. Residues 117–241 form the CRC domain; sequence KKKQCNCKHS…KCLDCKNFEG (125 aa). 3 stretches are compositionally biased toward polar residues: residues 293-319, 373-388, and 508-539; these read NQGTKDSSTHRLGQANNGRTTSSQTGS, QKETSVASSVQDQGHV, and GVSQTAKQPSQLNTTTPNTSSQTANGVSQTAK. Positions 540–557 are enriched in low complexity; sequence QPSQLTTTTTTPNTSSQT.

The protein belongs to the lin-54 family. In terms of tissue distribution, ubiquitous but expressed mostly in flowers.

The protein resides in the nucleus. Its function is as follows. Plays a role in development of both male and female reproductive tissues. In Arabidopsis thaliana (Mouse-ear cress), this protein is Protein tesmin/TSO1-like CXC 6 (TCX6).